We begin with the raw amino-acid sequence, 106 residues long: uncharacterized protein (106 aa).

Helical transmembrane passes span 10 to 30 (VYIQ…VAFV) and 65 to 85 (LDFA…LLAY).

It localises to the membrane. This is an uncharacterized protein from Saccharomyces cerevisiae (strain ATCC 204508 / S288c) (Baker's yeast).